A 213-amino-acid chain; its full sequence is Thymidylate kinase (213 aa).

Residue 11–18 coordinates ATP; the sequence is GPDGAGKT.

This sequence belongs to the thymidylate kinase family.

The enzyme catalyses dTMP + ATP = dTDP + ADP. In terms of biological role, phosphorylation of dTMP to form dTDP in both de novo and salvage pathways of dTTP synthesis. The polypeptide is Thymidylate kinase (Oenococcus oeni (strain ATCC BAA-331 / PSU-1)).